The following is a 463-amino-acid chain: Mitochondrial dynamics protein MIEF1 (463 aa).

Residues 1 to 23 (MAGAGERKGKKDDNGIGTAIDFV) are Mitochondrial intermembrane-facing. The chain crosses the membrane as a helical span at residues 24–46 (LSNARLVLGVGGAAMLGIATLAV). Residues 47–463 (KRMYDRAISA…LSEPEVLLQT (417 aa)) are Cytoplasmic-facing. The tract at residues 49–195 (MYDRAISAPT…LSGSLYDDLQ (147 aa)) is dimerization. S55, S59, S79, and S94 each carry phosphoserine. A disordered region spans residues 57–77 (PTSPTRLSHSGKRSWEEPNWM). The disordered stretch occupies residues 96–123 (QTLPTDSSTFDTDTFCPPRPKPVARKGQ). The segment covering 100–110 (TDSSTFDTDTF) has biased composition (low complexity). The segment at 160-169 (AAVDICAELR) is important for interaction with DNM1L. Residues S187, S189, and H201 each contribute to the ADP site. An important for interaction with DNM1L region spans residues 234–242 (RRENPEYFP). Residues S340, R342, and K368 each coordinate ADP.

This sequence belongs to the SMCR7 family. As to quaternary structure, homodimer. Interacts with DNM1L. Expression is relatively high in heart, skeletal muscle, pancreas and kidney.

Its subcellular location is the mitochondrion outer membrane. Mitochondrial outer membrane protein which regulates mitochondrial fission/fusion dynamics. Promotes the recruitment and association of the fission mediator dynamin-related protein 1 (DNM1L) to the mitochondrial surface independently of the mitochondrial fission FIS1 and MFF proteins. Regulates DNM1L GTPase activity and DNM1L oligomerization. Binds ADP and can also bind GDP, although with lower affinity. Does not bind CDP, UDP, ATP, AMP or GTP. Inhibits DNM1L GTPase activity in the absence of bound ADP. Requires ADP to stimulate DNM1L GTPase activity and the assembly of DNM1L into long, oligomeric tubules with a spiral pattern, as opposed to the ring-like DNM1L oligomers observed in the absence of bound ADP. Does not require ADP for its function in recruiting DNM1L. In Homo sapiens (Human), this protein is Mitochondrial dynamics protein MIEF1.